Here is a 491-residue protein sequence, read N- to C-terminus: Chromosomal replication initiator protein DnaA (491 aa).

A domain I, interacts with DnaA modulators region spans residues 1–69; the sequence is MTTWDKCLKK…TIQECHGNDL (69 aa). The interval 69–154 is domain II; that stretch reads LIIEYSNKKF…KEDEEYSFGL (86 aa). Positions 155 to 371 are domain III, AAA+ region; it reads PLKEKYVFDS…GALNRVLTTS (217 aa). Residues Gly199, Gly201, Lys202, and Thr203 each contribute to the ATP site. The tract at residues 372-491 is domain IV, binds dsDNA; the sequence is KFNHKDPTIE…YELLLDKISR (120 aa).

This sequence belongs to the DnaA family. As to quaternary structure, oligomerizes as a right-handed, spiral filament on DNA at oriC.

It is found in the cytoplasm. Plays an essential role in the initiation and regulation of chromosomal replication. ATP-DnaA binds to the origin of replication (oriC) to initiate formation of the DNA replication initiation complex once per cell cycle. Binds the DnaA box (a 9 base pair repeat at the origin) and separates the double-stranded (ds)DNA. Forms a right-handed helical filament on oriC DNA; dsDNA binds to the exterior of the filament while single-stranded (ss)DNA is stabiized in the filament's interior. The ATP-DnaA-oriC complex binds and stabilizes one strand of the AT-rich DNA unwinding element (DUE), permitting loading of DNA polymerase. After initiation quickly degrades to an ADP-DnaA complex that is not apt for DNA replication. Binds acidic phospholipids. This chain is Chromosomal replication initiator protein DnaA, found in Francisella tularensis subsp. holarctica (strain FTNF002-00 / FTA).